The primary structure comprises 704 residues: Polyribonucleotide nucleotidyltransferase (704 aa).

Mg(2+) is bound by residues Asp490 and Asp496. The KH domain occupies 557–616; sequence PKIEMIQIKPAKIKDVIGKGGETINSIIDETGVKIDIDQDGNVSIASSDAEMIKKAIKII. Positions 626-694 constitute an S1 motif domain; sequence GQVYLAKVVR…KQGRVNVSRK (69 aa).

Belongs to the polyribonucleotide nucleotidyltransferase family. Mg(2+) is required as a cofactor.

The protein resides in the cytoplasm. It catalyses the reaction RNA(n+1) + phosphate = RNA(n) + a ribonucleoside 5'-diphosphate. Functionally, involved in mRNA degradation. Catalyzes the phosphorolysis of single-stranded polyribonucleotides processively in the 3'- to 5'-direction. This is Polyribonucleotide nucleotidyltransferase from Enterococcus faecalis (strain ATCC 700802 / V583).